A 133-amino-acid chain; its full sequence is uncharacterized protein (133 aa).

One can recognise a Response regulatory domain in the interval 9-128 (RILVYSDNVQ…VLGRTVLSLL (120 aa)). The residue at position 64 (Asp-64) is a 4-aspartylphosphate.

This is an uncharacterized protein from Mycobacterium tuberculosis (strain CDC 1551 / Oshkosh).